The chain runs to 91 residues: U6 snRNA-associated Sm-like protein LSm5 (91 aa).

A2 carries the post-translational modification N-acetylalanine. Residues 13–88 (LPLELVDKCI…ITMLVPGGEG (76 aa)) form the Sm domain.

It belongs to the snRNP Sm proteins family. As to quaternary structure, component of the precatalytic spliceosome (spliceosome B complex). Component of the U4/U6-U5 tri-snRNP complex, a building block of the precatalytic spliceosome (spliceosome B complex). The U4/U6-U5 tri-snRNP complex is composed of the U4, U6 and U5 snRNAs and at least PRPF3, PRPF4, PRPF6, PRPF8, PRPF31, SNRNP200, TXNL4A, SNRNP40, SNRPB, SNRPD1, SNRPD2, SNRPD3, SNRPE, SNRPF, SNRPG, DDX23, CD2BP2, PPIH, SNU13, EFTUD2, SART1 and USP39, plus LSM2, LSM3, LSM4, LSM5, LSM6, LSM7 and LSM8. LSM2, LSM3, LSM4, LSM5, LSM6, LSM7 and LSM8 form a heptameric, ring-shaped subcomplex (the LSM2-8 complex) that is part of the U4/U6-U5 tri-snRNP complex and the precatalytic spliceosome.

The protein resides in the nucleus. Its function is as follows. Plays a role in pre-mRNA splicing as component of the U4/U6-U5 tri-snRNP complex that is involved in spliceosome assembly, and as component of the precatalytic spliceosome (spliceosome B complex). The heptameric LSM2-8 complex binds specifically to the 3'-terminal U-tract of U6 snRNA. The polypeptide is U6 snRNA-associated Sm-like protein LSm5 (LSM5) (Bos taurus (Bovine)).